Reading from the N-terminus, the 383-residue chain is Neuropeptide Y receptor type 1 (383 aa).

The Extracellular portion of the chain corresponds to 1-44 (MNSTLSSQVENHSIYYNFSEKNSQFLAFENDDCHLPLAMIFTLA). N-linked (GlcNAc...) asparagine glycosylation is found at N2, N11, and N17. A helical transmembrane segment spans residues 45 to 65 (LAYGAVIILGVSGNLALIIII). Topologically, residues 66–76 (LKQKEMRNVTN) are cytoplasmic. Residues 77-97 (ILIVNLSFSDLLVAIMCLPFT) traverse the membrane as a helical segment. Topologically, residues 98 to 116 (FVYTLMDHWVFGEVMCKLN) are extracellular. C113 and C198 form a disulfide bridge. The chain crosses the membrane as a helical span at residues 117–137 (PFVQCVSITVSIFSLVLIAVE). The Cytoplasmic segment spans residues 138–154 (RHQLIINPRGWRPSNRH). Residues 155–175 (AYVGIAVIWVLAVASSLPFLI) form a helical membrane-spanning segment. Over 176-211 (YQVLTDEPFQNVTLDAFKDKYVCFDKFLSDSHRLSY) the chain is Extracellular. Residues 212-232 (TTLLLVLQYFGPLCFIFICYF) form a helical membrane-spanning segment. At 233-260 (KIYIRLKRRNNMMDKMRDNKYRSSETKR) the chain is on the cytoplasmic side. Residues 261–281 (INVMLLSIVVAFAVCWLPLTI) traverse the membrane as a helical segment. At 282–299 (FNTVFDWNHQIIATCNHN) the chain is on the extracellular side. Residues 300-320 (LLFLLCHLTAMISTCINPIFY) traverse the membrane as a helical segment. Residues 321–383 (GFLNKNFQRD…KIHSDDNEKI (63 aa)) lie on the Cytoplasmic side of the membrane. C338 carries the S-palmitoyl cysteine lipid modification. S368 carries the post-translational modification Phosphoserine.

The protein belongs to the G-protein coupled receptor 1 family.

The protein resides in the cell membrane. Functionally, receptor for neuropeptide Y and peptide YY. The chain is Neuropeptide Y receptor type 1 (NPY1R) from Sus scrofa (Pig).